We begin with the raw amino-acid sequence, 398 residues long: Histidinol-phosphate aminotransferase (398 aa).

Polar residues predominate over residues 1 to 10; that stretch reads MTGQRATPQP. Positions 1–30 are disordered; sequence MTGQRATPQPTLDDLPLRDDLRGKSPYGAP. Lys-234 is modified (N6-(pyridoxal phosphate)lysine).

Belongs to the class-II pyridoxal-phosphate-dependent aminotransferase family. Histidinol-phosphate aminotransferase subfamily. As to quaternary structure, homodimer. Pyridoxal 5'-phosphate is required as a cofactor.

The enzyme catalyses L-histidinol phosphate + 2-oxoglutarate = 3-(imidazol-4-yl)-2-oxopropyl phosphate + L-glutamate. It functions in the pathway amino-acid biosynthesis; L-histidine biosynthesis; L-histidine from 5-phospho-alpha-D-ribose 1-diphosphate: step 7/9. This chain is Histidinol-phosphate aminotransferase, found in Mycolicibacterium paratuberculosis (strain ATCC BAA-968 / K-10) (Mycobacterium paratuberculosis).